A 208-amino-acid chain; its full sequence is Large ribosomal subunit protein uL3 (208 aa).

The disordered stretch occupies residues 116 to 148; the sequence is GFQGVIKRHGQSRGPMAHGSRYHRRPGSMGPVA.

This sequence belongs to the universal ribosomal protein uL3 family. Part of the 50S ribosomal subunit. Forms a cluster with proteins L14 and L19.

Its function is as follows. One of the primary rRNA binding proteins, it binds directly near the 3'-end of the 23S rRNA, where it nucleates assembly of the 50S subunit. The chain is Large ribosomal subunit protein uL3 from Streptococcus pyogenes serotype M6 (strain ATCC BAA-946 / MGAS10394).